The following is a 250-amino-acid chain: Cell division protein ZapD (250 aa).

It belongs to the ZapD family. Interacts with FtsZ.

The protein resides in the cytoplasm. In terms of biological role, cell division factor that enhances FtsZ-ring assembly. Directly interacts with FtsZ and promotes bundling of FtsZ protofilaments, with a reduction in FtsZ GTPase activity. The polypeptide is Cell division protein ZapD (Yersinia pestis bv. Antiqua (strain Antiqua)).